A 146-amino-acid chain; its full sequence is SPFSAHEEKLIVDLWAKVDVASCGGDALSRMLIIYPWKRRYFEHFGKLSTDQDVLHNEKIREHGKKVLASFGEAVKHLDNIKGHFAHLSKLHFEKFHVDCENFKLLGDIIIVVLGMHHPKDFTLQTHAAFQKLVRHVAAALSAEYH.

In terms of domain architecture, Globin spans 2–146; the sequence is PFSAHEEKLI…VAAALSAEYH (145 aa). The heme b site is built by His63 and His92.

It belongs to the globin family. As to quaternary structure, heterotetramer of two alpha chains and two beta chains. As to expression, red blood cells.

Functionally, involved in oxygen transport from the lung to the various peripheral tissues. The chain is Hemoglobin subunit beta (HBB) from Caiman crocodilus (Spectacled caiman).